A 356-amino-acid polypeptide reads, in one-letter code: L-Lys-D/L-Arg epimerase (356 aa).

Substrate contacts are provided by residues threonine 135 and 160-162; that span reads KVK. Aspartate 190, glutamate 216, and aspartate 241 together coordinate Mg(2+). Residues lysine 266, aspartate 296, and 319–321 contribute to the substrate site; that span reads DLD.

It belongs to the mandelate racemase/muconate lactonizing enzyme family. Mg(2+) is required as a cofactor.

Its function is as follows. Catalyzes the epimerization of L-Lys-L-Arg to L-Lys-D-Arg. Can also catalyze the epimerization of other cationic dipeptides, such as L-Arg-L-Arg, L-Lys-L-Lys and L-Lys-L-His, but with lower efficiency (in vitro). This chain is L-Lys-D/L-Arg epimerase, found in Methylococcus capsulatus (strain ATCC 33009 / NCIMB 11132 / Bath).